The chain runs to 208 residues: Cytochrome c oxidase assembly protein CtaG (208 aa).

Residues 1 to 19 are Cytoplasmic-facing; that stretch reads MPDTQPNVSPNPIRRRGLG. The chain crosses the membrane as a helical; Signal-anchor for type II membrane protein span at residues 20 to 42; the sequence is RDATVASICGLVVALMVGASFAA. Topologically, residues 43–208 are periplasmic; the sequence is VPFYNWFCRT…TAPDKRKGNL (166 aa).

Belongs to the COX11/CtaG family.

It is found in the cell inner membrane. In terms of biological role, exerts its effect at some terminal stage of cytochrome c oxidase synthesis, probably by being involved in the insertion of the copper B into subunit I. This Rhodopseudomonas palustris (strain HaA2) protein is Cytochrome c oxidase assembly protein CtaG.